Consider the following 156-residue polypeptide: Ribosome maturation factor RimP (156 aa).

The protein belongs to the RimP family.

The protein resides in the cytoplasm. Functionally, required for maturation of 30S ribosomal subunits. The polypeptide is Ribosome maturation factor RimP (Bacillus velezensis (strain DSM 23117 / BGSC 10A6 / LMG 26770 / FZB42) (Bacillus amyloliquefaciens subsp. plantarum)).